A 366-amino-acid polypeptide reads, in one-letter code: Inhibin alpha chain (366 aa).

Residues Met-1–Ser-20 form the signal peptide. A propeptide spanning residues Cys-21–Arg-63 is cleaved from the precursor. Residues His-64–Arg-233 constitute a propeptide, inhibin alpha N-terminal region. Residues Asn-147 and Asn-269 are each glycosylated (N-linked (GlcNAc...) asparagine). 3 cysteine pairs are disulfide-bonded: Cys-263–Cys-328, Cys-292–Cys-363, and Cys-296–Cys-365.

This sequence belongs to the TGF-beta family. Dimeric, linked by one or more disulfide bonds. Activin B is a dimer of alpha and beta-B. Inhibin A is a dimer of alpha and beta-A. Inhibin B is a dimer of alpha and beta-B. Interacts with TGFBR3L; this interaction regulates female fertility. Proteolytic processing yields a number of bioactive forms, consisting either solely of the mature alpha chain, of the most N-terminal propeptide linked through a disulfide bond to the mature alpha chain, or of the entire proprotein.

Its subcellular location is the secreted. Its function is as follows. Inhibins and activins inhibit and activate, respectively, the secretion of follitropin by the pituitary gland. Inhibins/activins are involved in regulating a number of diverse functions such as hypothalamic and pituitary hormone secretion, gonadal hormone secretion, germ cell development and maturation, erythroid differentiation, insulin secretion, nerve cell survival, embryonic axial development or bone growth, depending on their subunit composition. Inhibins appear to oppose the functions of activins. Functionally, inhibin A is a dimer of alpha/INHA and beta-A/INHBA that functions as a feedback regulator in the hypothalamic-pituitary-gonadal (HPG) axis. Inhibits the secretion of FSH from the anterior pituitary gland by acting on pituitary gonadotrope cells. Antagonizes activin A by binding to the proteoglycan, betaglycan, and forming a stable complex with and, thereby, sequestering type II activin receptors while excluding type I receptor. Inhibin B is a dimer of alpha and beta-B that plays a crucial role in the regulation of the reproductive system by inhibiting the secretion of follicle-stimulating hormone (FSH) from the anterior pituitary gland. Thereby, maintains reproductive homeostasis in both males and females. Acts as a more potent suppressor of FSH release than inhibin A. Functions as competitive receptor antagonist binding activin type II receptors with high affinity in the presence of the TGF-beta type III coreceptor/TGFBR3L. This chain is Inhibin alpha chain (Inha), found in Mus musculus (Mouse).